The primary structure comprises 376 residues: MFQLSVQDIHPGEQVGNKEEAIRQIAAALAQAGNVAGGYVDGMLAREQQTSTFLGNGIAIPHGTTDTRDQVLKTGVQVFQFPQGVTWGEGQVAYVAIGIAASSDEHLGLLRQLTHVLSDDSVAEQLKSATTAEELRALLMGEKQSEQLKLDNETMTLDVIASSLVTLQALNAARLKEAGAVDAAFVAKTINDSPMNLGQGIWLNDSAEGNLRSAVAVSRATQAFDVEGEKAALLVTVAMNDEQPIAVLKRLGDLLLNNKADRLLSADAATLLALLTSDDALTDDVLSAEFVVRNEHGLHARPGTMLVNTIKQFNSEITVTNLDGTGKPANGRSLMKVVALGVKKGHRLRFTAQGEDAEQALKAIGDAIAAGLGEGA.

One can recognise a PTS EIIA type-2 domain in the interval F2–E142. Residue H62 is the Tele-phosphohistidine intermediate; for EIIA activity of the active site. Phosphohistidine; by HPr is present on H62. The m domain stretch occupies residues T156–D284. Residues V285–G375 form the HPr domain. The active-site Pros-phosphohistidine intermediate; for HPr activity is H299. At H299 the chain carries Phosphohistidine; by EI.

It is found in the cytoplasm. The phosphoenolpyruvate-dependent sugar phosphotransferase system (sugar PTS), a major carbohydrate active transport system, catalyzes the phosphorylation of incoming sugar substrates concomitantly with their translocation across the cell membrane. The enzyme II FruAB PTS system is involved in fructose transport. The protein is Multiphosphoryl transfer protein (fruB) of Salmonella typhi.